Reading from the N-terminus, the 63-residue chain is Transmembrane protein 033R (63 aa).

In Dryophytes versicolor (chameleon treefrog), this protein is Transmembrane protein 033R.